Here is a 378-residue protein sequence, read N- to C-terminus: MAGDFYEILGVSRDCGKDELKRAYRRLARQYHPDVNKDPGAEEKFKEINRAYEVLSEPETRARYDRFGEAGVSGAGAAGADYGDMGGFADIFETIFSGFGGMGTGATGGGRRRSGPMRGDDLRLDLKLDFKEAIFGGEKEIRIPHLETCKTCSGSGAKAGTSANTCGTCNGTGQVRRATRTPFGSFAQVSVCPTCNGEGQVIAEKCESCGGAGRKQETKKLKITIPAGVDSGTRLRVSREGDAGVKGGPPGDLYVYLAVNADKEFRRDGTNILSEIEISYLQAILGDTVKVKTVDGTEDLTIPAGLQPNKVLILEGKGVPKLGNPVSRGDHLITVKVMIPTKVSREEKELLHQLAKLKGTEHSKGGFEGLLGNLFHNK.

One can recognise a J domain in the interval 4-68 (DFYEILGVSR…ETRARYDRFG (65 aa)). Residues 136–218 (GGEKEIRIPH…CGGAGRKQET (83 aa)) form a CR-type zinc finger. Cysteine 149, cysteine 152, cysteine 166, cysteine 169, cysteine 192, cysteine 195, cysteine 206, and cysteine 209 together coordinate Zn(2+). 4 CXXCXGXG motif repeats span residues 149-156 (CKTCSGSG), 166-173 (CGTCNGTG), 192-199 (CPTCNGEG), and 206-213 (CESCGGAG).

The protein belongs to the DnaJ family. As to quaternary structure, homodimer. Zn(2+) serves as cofactor.

The protein resides in the cytoplasm. Participates actively in the response to hyperosmotic and heat shock by preventing the aggregation of stress-denatured proteins and by disaggregating proteins, also in an autonomous, DnaK-independent fashion. Unfolded proteins bind initially to DnaJ; upon interaction with the DnaJ-bound protein, DnaK hydrolyzes its bound ATP, resulting in the formation of a stable complex. GrpE releases ADP from DnaK; ATP binding to DnaK triggers the release of the substrate protein, thus completing the reaction cycle. Several rounds of ATP-dependent interactions between DnaJ, DnaK and GrpE are required for fully efficient folding. Also involved, together with DnaK and GrpE, in the DNA replication of plasmids through activation of initiation proteins. The chain is Chaperone protein DnaJ from Picosynechococcus sp. (strain ATCC 27264 / PCC 7002 / PR-6) (Agmenellum quadruplicatum).